The primary structure comprises 872 residues: Metabotropic glutamate receptor 2 (872 aa).

The first 18 residues, 1–18, serve as a signal peptide directing secretion; that stretch reads MGSLLALLALLLLWGAVA. Residues 19 to 567 lie on the Extracellular side of the membrane; that stretch reads EGPAKKVLTL…QEYIRWGDAW (549 aa). Cysteine 50 and cysteine 92 form a disulfide bridge. L-glutamate is bound by residues arginine 57, arginine 61, serine 145, alanine 166, and threonine 168. N-linked (GlcNAc...) asparagine glycosylation is found at asparagine 203 and asparagine 286. 7 disulfide bridges follow: cysteine 234/cysteine 518, cysteine 355/cysteine 362, cysteine 400/cysteine 407, cysteine 500/cysteine 519, cysteine 504/cysteine 522, cysteine 525/cysteine 537, and cysteine 540/cysteine 553. Residue aspartate 295 participates in L-glutamate binding. Asparagine 338 carries an N-linked (GlcNAc...) asparagine glycan. Lysine 377 contacts L-glutamate. N-linked (GlcNAc...) asparagine glycosylation occurs at asparagine 402. An N-linked (GlcNAc...) asparagine glycan is attached at asparagine 547. Residues 568 to 590 form a helical membrane-spanning segment; that stretch reads AVGPVTIACLGALATLFVLGVFV. The Cytoplasmic portion of the chain corresponds to 591–604; that stretch reads RHNATPVVKASGRE. A helical transmembrane segment spans residues 605–625; sequence LCYILLGGVFLCYCMTFIFIA. The Extracellular segment spans residues 626 to 636; that stretch reads KPSTAVCTLRR. Cysteine 632 and cysteine 721 are disulfide-bonded. Residues 637 to 655 traverse the membrane as a helical segment; that stretch reads LGLGTAFSVCYSALLTKTN. Over 656–679 the chain is Cytoplasmic; sequence RIARIFGGAREGAQRPRFISPASQ. Residues 677–685 form an important for interaction with HTR2A region; it reads ASQVAICLA. The helical transmembrane segment at 680 to 700 threads the bilayer; the sequence is VAICLALISGQLLIVVAWLVV. Over 701–725 the chain is Extracellular; the sequence is EAPGTGKETAPERREVVTLRCNHRD. Residues 726–747 form a helical membrane-spanning segment; sequence ASMLGSLAYNVLLIALCTLYAF. Topologically, residues 748–760 are cytoplasmic; sequence KTRKCPENFNEAK. Residues 761 to 783 form a helical membrane-spanning segment; the sequence is FIGFTMYTTCIIWLAFLPIFYVT. The Extracellular segment spans residues 784–793; the sequence is SSDYRVQTTT. A helical transmembrane segment spans residues 794–819; it reads MCVSVSLSGSVVLGCLFAPKLHIILF. Residues 820–872 are Cytoplasmic-facing; sequence QPQKNVVSHRAPTSRFGSAAARASSSLGQGSGSQFVPTVCNGREVVDSTTSSL.

It belongs to the G-protein coupled receptor 3 family. As to quaternary structure, forms heterodimers with GRM3 or GRM4. Interacts with TAMALIN. Interacts with HTR2A. (Microbial infection) Interacts with H5N6 virus protein HA. In terms of assembly, (Microbial infection) Interacts with rabies virus protein G. As to quaternary structure, (Microbial infection) Interacts with SARS-CoV-2 virus spike protein S. As to expression, detected in brain cortex (at protein level). Widely expressed in different regions of the adult brain as well as in fetal brain.

The protein resides in the cell membrane. It is found in the synapse. Its subcellular location is the cell projection. The protein localises to the dendrite. In terms of biological role, dimeric G protein-coupled receptor which is activated by the excitatory neurotransmitter L-glutamate. Plays critical roles in modulating synaptic transmission and neuronal excitability. Upon activation by glutamate, inhibits presynaptic calcium channels, reducing further glutamate release and dampening excitatory signaling. Mechanistically, ligand binding causes a conformation change that triggers signaling via guanine nucleotide-binding proteins (G proteins) and modulates the activity of down-stream effectors, such as adenylate cyclase. May mediate suppression of neurotransmission or may be involved in synaptogenesis or synaptic stabilization. (Microbial infection) Plays an important role in influenza virus internalization. Functionally, (Microbial infection) Acts as a host entry factor for rabies virus that hijacks the endocytosis of GRM2 to enter cells. Its function is as follows. (Microbial infection) Acts as a host entry factor for SARS-CoV-2 that hijacks the endocytosis of GRM2 to enter cells. The polypeptide is Metabotropic glutamate receptor 2 (Homo sapiens (Human)).